Reading from the N-terminus, the 721-residue chain is BBSome complex member BBS2 (721 aa).

Residues 325–369 (RGNLMDTSAEQDLIRELSQKKQNLLLELRNYEENAKAELASPLNE) are a coiled coil.

In terms of assembly, part of BBSome complex, that contains BBS1, BBS2, BBS4, BBS5, BBS7, BBS8/TTC8, BBS9 and BBIP10. Interacts (via C-terminus) with BBS7. Interacts (via coiled coil domain) with MKKS. Interacts with CCDC28B and ALDOB. Interacts with DLEC1. In terms of tissue distribution, widely expressed.

It is found in the cell projection. The protein localises to the cilium membrane. It localises to the cytoplasm. Its subcellular location is the cytoskeleton. The protein resides in the microtubule organizing center. It is found in the centrosome. The protein localises to the centriolar satellite. Functionally, the BBSome complex is thought to function as a coat complex required for sorting of specific membrane proteins to the primary cilia. The BBSome complex is required for ciliogenesis but is dispensable for centriolar satellite function. This ciliogenic function is mediated in part by the Rab8 GDP/GTP exchange factor, which localizes to the basal body and contacts the BBSome. Rab8(GTP) enters the primary cilium and promotes extension of the ciliary membrane. Firstly the BBSome associates with the ciliary membrane and binds to RAB3IP/Rabin8, the guanosyl exchange factor (GEF) for Rab8 and then the Rab8-GTP localizes to the cilium and promotes docking and fusion of carrier vesicles to the base of the ciliary membrane. The BBSome complex, together with the LTZL1, controls SMO ciliary trafficking and contributes to the sonic hedgehog (SHH) pathway regulation. Required for proper BBSome complex assembly and its ciliary localization. This is BBSome complex member BBS2 from Homo sapiens (Human).